Here is a 372-residue protein sequence, read N- to C-terminus: Spermidine/putrescine import ATP-binding protein PotA (372 aa).

Residues 12–242 (IQLKGLNKSF…PTNLFVARFI (231 aa)) form the ABC transporter domain. Position 44–51 (44–51 (GPSGCGKT)) interacts with ATP.

This sequence belongs to the ABC transporter superfamily. Spermidine/putrescine importer (TC 3.A.1.11.1) family. As to quaternary structure, the complex is composed of two ATP-binding proteins (PotA), two transmembrane proteins (PotB and PotC) and a solute-binding protein (PotD).

It is found in the cell inner membrane. It catalyses the reaction ATP + H2O + polyamine-[polyamine-binding protein]Side 1 = ADP + phosphate + polyamineSide 2 + [polyamine-binding protein]Side 1.. In terms of biological role, part of the ABC transporter complex PotABCD involved in spermidine/putrescine import. Responsible for energy coupling to the transport system. This chain is Spermidine/putrescine import ATP-binding protein PotA, found in Photobacterium profundum (strain SS9).